A 562-amino-acid chain; its full sequence is Solute carrier family 22 member 6 (562 aa).

Over 1-15 (MPFSELLEQVGSTGR) the chain is Cytoplasmic. Residues 16–36 (FQVLHVTLLCIPVLMMASHNL) form a helical membrane-spanning segment. Residues 37-147 (LQNFVATVPS…LVCDMHSFKQ (111 aa)) are Extracellular-facing. A helical membrane pass occupies residues 148–168 (MGQTIYMGGVLVGALLFGGLS). At 169-174 (DRYGRR) the chain is on the cytoplasmic side. Residues 175-195 (ILLLISNLLMAVSGTCAAFSS) traverse the membrane as a helical segment. The Extracellular segment spans residues 196–205 (SFSLFCVFRF). A helical transmembrane segment spans residues 206–226 (GCGLALSGLGLNTFSLIVEWI). Over 227 to 235 (PTRIRTAVG) the chain is Cytoplasmic. Residues 236–256 (TTTGYCYTLGQLILVLLAYFI) traverse the membrane as a helical segment. At 257–260 (RDWR) the chain is on the extracellular side. A helical membrane pass occupies residues 261–281 (WLTLAVSLPFYVFFLIAWWFH). At 282-351 (ESSRWLALSN…FNTPAMRKRT (70 aa)) the chain is on the cytoplasmic side. A helical membrane pass occupies residues 352-372 (LCLSAVWLSTSFAYYGLAMDL). The Extracellular portion of the chain corresponds to 373-378 (DKFGVD). The chain crosses the membrane as a helical span at residues 379–399 (IYLIQVIFGAVDIPAKVVVVV). Residues 400–408 (SMSLIGRRR) are Cytoplasmic-facing. Residues 409 to 429 (SQCAVLVVAGITILLNLLVPY) traverse the membrane as a helical segment. Residues 430-444 (DKQTIRTCLAVLGKG) lie on the Extracellular side of the membrane. The chain crosses the membrane as a helical span at residues 445 to 465 (CLAASFNCCYLYSGELFPTII). The Cytoplasmic portion of the chain corresponds to 466–468 (RQN). The chain crosses the membrane as a helical span at residues 469 to 489 (GMGWVSMMARIGAMVAPMVLL). The Extracellular portion of the chain corresponds to 490–495 (TRDYIP). A helical transmembrane segment spans residues 496 to 516 (WLPGLIYGGAPILSGLAAIFL). The Cytoplasmic segment spans residues 517-562 (PETLGYPLPDTIQDVEESGSGRKSKMSTKETITLQDKQANLLKQSA).

This sequence belongs to the major facilitator (TC 2.A.1) superfamily. Organic cation transporter (TC 2.A.1.19) family. Glycosylated. Glycosylation is necessary for proper targeting of the transporter to the plasma membrane.

The protein localises to the cell membrane. It localises to the basolateral cell membrane. Its subcellular location is the basal cell membrane. Involved in the renal elimination of endogenous and exogenous organic anions. Functions as organic anion exchanger when the uptake of one molecule of organic anion is coupled with an efflux of one molecule of endogenous dicarboxylic acid (glutarate, ketoglutarate, etc). Mediates the sodium-independent uptake of p-aminohippurate (PAH), 2,3-dimercapto-1-propanesulfonic acid (DMPS), cidofovir, adefovir, 9-(2-phosphonylmethoxyethyl) guanine (PMEG), 9-(2-phosphonylmethoxyethyl) diaminopurine (PMEDAP), ochratoxin (OTA), acyclovir (ACV), 3'-azido-3-'deoxythymidine (AZT), cimetidine (CMD), 2,4-dichloro-phenoxyacetate (2,4-D), hippurate (HA), indoleacetate (IA), indoxyl sulfate (IS), 3-carboxy-4-methyl-5-propyl-2-furanpropionate (CMPF) and edaravone sulfate. Mediates the sodium-independent uptake of p-aminohippurate (PAH). PAH uptake is inhibited by p-chloromercuribenzenesulphonate (PCMBS), diethyl pyrocarbonate (DEPC), indomethacin, sulindac, diclofenac, carprofen, okadaic acid, benzothiazolylcysteine (BTC), S-chlorotrifluoroethylcysteine (CTFC), cysteine S-conjugates S-dichlorovinylcysteine (DCVC), furosemide, steviol, phorbol 12-myristate 13-acetate (PMA), calcium ionophore A23187, benzylpenicillin, bumetamide, losartan, probenecid, phenol red, urate, glutarate and alpha-ketoglutarate. PAH uptake is inhibited by glutarate. The polypeptide is Solute carrier family 22 member 6 (SLC22A6) (Pseudopleuronectes americanus (Winter flounder)).